We begin with the raw amino-acid sequence, 585 residues long: Nitrogen permease regulator 3-like protein (585 aa).

Positions 117–157 are disordered; it reads GEWAKRRKPRTTVESNASSSHLVSKPESSHPSTGSFEVKSS. A compositionally biased stretch (polar residues) spans 128–138; it reads TVESNASSSHL. The span at 148–157 shows a compositional bias: low complexity; the sequence is STGSFEVKSS.

It belongs to the NPR3 family.

The polypeptide is Nitrogen permease regulator 3-like protein (Schizosaccharomyces pombe (strain 972 / ATCC 24843) (Fission yeast)).